The following is a 659-amino-acid chain: DNA ligase (659 aa).

NAD(+)-binding positions include 32–36, 81–82, and Glu-111; these read DFEYD and SL. Lys-113 (N6-AMP-lysine intermediate) is an active-site residue. Arg-134, Glu-168, Lys-280, and Lys-304 together coordinate NAD(+). Zn(2+) contacts are provided by Cys-398, Cys-401, Cys-416, and Cys-421. Positions 585–655 constitute a BRCT domain; that stretch reads ETNSIYFQKR…KELNIPIINE (71 aa).

The protein belongs to the NAD-dependent DNA ligase family. LigA subfamily. Mg(2+) serves as cofactor. Requires Mn(2+) as cofactor.

The enzyme catalyses NAD(+) + (deoxyribonucleotide)n-3'-hydroxyl + 5'-phospho-(deoxyribonucleotide)m = (deoxyribonucleotide)n+m + AMP + beta-nicotinamide D-nucleotide.. In terms of biological role, DNA ligase that catalyzes the formation of phosphodiester linkages between 5'-phosphoryl and 3'-hydroxyl groups in double-stranded DNA using NAD as a coenzyme and as the energy source for the reaction. It is essential for DNA replication and repair of damaged DNA. In Mycoplasma genitalium (strain ATCC 33530 / DSM 19775 / NCTC 10195 / G37) (Mycoplasmoides genitalium), this protein is DNA ligase.